A 571-amino-acid chain; its full sequence is Phosphoenolpyruvate-protein phosphotransferase (571 aa).

His207 (tele-phosphohistidine intermediate) is an active-site residue. Phosphoenolpyruvate-binding residues include Arg312 and Arg348. Mg(2+) is bound by residues Glu435 and Asp459. Phosphoenolpyruvate is bound by residues 458-459 (ND) and Arg469. Cys506 acts as the Proton donor in catalysis.

The protein belongs to the PEP-utilizing enzyme family. Homodimer. Requires Mg(2+) as cofactor.

It is found in the cytoplasm. The catalysed reaction is L-histidyl-[protein] + phosphoenolpyruvate = N(pros)-phospho-L-histidyl-[protein] + pyruvate. General (non sugar-specific) component of the phosphoenolpyruvate-dependent sugar phosphotransferase system (sugar PTS). This major carbohydrate active-transport system catalyzes the phosphorylation of incoming sugar substrates concomitantly with their translocation across the cell membrane. Enzyme I transfers the phosphoryl group from phosphoenolpyruvate (PEP) to the phosphoryl carrier protein (HPr). In Chlamydia trachomatis serovar D (strain ATCC VR-885 / DSM 19411 / UW-3/Cx), this protein is Phosphoenolpyruvate-protein phosphotransferase (ptsI).